Consider the following 539-residue polypeptide: Chaperonin GroEL (539 aa).

Residues 29–32, 86–90, glycine 413, 477–479, and aspartate 493 contribute to the ATP site; these read TLGP, DGTTT, and NAA.

This sequence belongs to the chaperonin (HSP60) family. Forms a cylinder of 14 subunits composed of two heptameric rings stacked back-to-back. Interacts with the co-chaperonin GroES.

The protein resides in the cytoplasm. The catalysed reaction is ATP + H2O + a folded polypeptide = ADP + phosphate + an unfolded polypeptide.. Its function is as follows. Together with its co-chaperonin GroES, plays an essential role in assisting protein folding. The GroEL-GroES system forms a nano-cage that allows encapsulation of the non-native substrate proteins and provides a physical environment optimized to promote and accelerate protein folding. The protein is Chaperonin GroEL of Clavibacter michiganensis subsp. michiganensis (strain NCPPB 382).